A 278-amino-acid polypeptide reads, in one-letter code: Large ribosomal subunit protein uL2 (278 aa).

Residues 201–278 (HGNINDGKAG…IMRSRHQKKK (78 aa)) form a disordered region. Residues 210–221 (GRSRWRGKRPHV) show a composition bias toward basic residues.

The protein belongs to the universal ribosomal protein uL2 family. In terms of assembly, part of the 50S ribosomal subunit. Forms a bridge to the 30S subunit in the 70S ribosome.

One of the primary rRNA binding proteins. Required for association of the 30S and 50S subunits to form the 70S ribosome, for tRNA binding and peptide bond formation. It has been suggested to have peptidyltransferase activity; this is somewhat controversial. Makes several contacts with the 16S rRNA in the 70S ribosome. The polypeptide is Large ribosomal subunit protein uL2 (Allorhizobium ampelinum (strain ATCC BAA-846 / DSM 112012 / S4) (Agrobacterium vitis (strain S4))).